The primary structure comprises 459 residues: Ribulose bisphosphate carboxylase large chain (459 aa).

Lysine 4 carries the post-translational modification N6,N6,N6-trimethyllysine. Positions 113 and 163 each coordinate substrate. Lysine 165 (proton acceptor) is an active-site residue. Lysine 167 lines the substrate pocket. Mg(2+)-binding residues include lysine 191, aspartate 193, and glutamate 194. An N6-carboxylysine modification is found at lysine 191. Histidine 284 serves as the catalytic Proton acceptor. Substrate contacts are provided by arginine 285, histidine 317, and serine 369.

It belongs to the RuBisCO large chain family. Type I subfamily. Heterohexadecamer of 8 large chains and 8 small chains; disulfide-linked. The disulfide link is formed within the large subunit homodimers. Requires Mg(2+) as cofactor. The disulfide bond which can form in the large chain dimeric partners within the hexadecamer appears to be associated with oxidative stress and protein turnover.

The protein resides in the plastid. Its subcellular location is the chloroplast. The enzyme catalyses 2 (2R)-3-phosphoglycerate + 2 H(+) = D-ribulose 1,5-bisphosphate + CO2 + H2O. The catalysed reaction is D-ribulose 1,5-bisphosphate + O2 = 2-phosphoglycolate + (2R)-3-phosphoglycerate + 2 H(+). Its function is as follows. RuBisCO catalyzes two reactions: the carboxylation of D-ribulose 1,5-bisphosphate, the primary event in carbon dioxide fixation, as well as the oxidative fragmentation of the pentose substrate in the photorespiration process. Both reactions occur simultaneously and in competition at the same active site. This Geum quellyon (Chilean avens) protein is Ribulose bisphosphate carboxylase large chain.